Here is a 316-residue protein sequence, read N- to C-terminus: Haloacid dehalogenase-like hydrolase domain-containing protein At4g39970 (316 aa).

The N-terminal 46 residues, Met1–Tyr46, are a transit peptide targeting the chloroplast. The Nucleophile role is filled by Asp69. The Mg(2+) site is built by Asp69, Asp71, and Asp259. The active-site Proton donor is the Asp71.

The protein belongs to the HAD-like hydrolase superfamily. DOG/GPP family. The cofactor is Mg(2+).

Its subcellular location is the plastid. It is found in the chloroplast. In Arabidopsis thaliana (Mouse-ear cress), this protein is Haloacid dehalogenase-like hydrolase domain-containing protein At4g39970.